The primary structure comprises 313 residues: Ribonuclease Z (313 aa).

Zn(2+) is bound by residues histidine 63, histidine 65, aspartate 67, histidine 68, histidine 142, aspartate 212, and histidine 270. Catalysis depends on aspartate 67, which acts as the Proton acceptor.

It belongs to the RNase Z family. In terms of assembly, homodimer. It depends on Zn(2+) as a cofactor.

The catalysed reaction is Endonucleolytic cleavage of RNA, removing extra 3' nucleotides from tRNA precursor, generating 3' termini of tRNAs. A 3'-hydroxy group is left at the tRNA terminus and a 5'-phosphoryl group is left at the trailer molecule.. Functionally, zinc phosphodiesterase, which displays some tRNA 3'-processing endonuclease activity. Probably involved in tRNA maturation, by removing a 3'-trailer from precursor tRNA. This Enterococcus faecalis (strain ATCC 700802 / V583) protein is Ribonuclease Z.